We begin with the raw amino-acid sequence, 523 residues long: 2-isopropylmalate synthase (523 aa).

The 263-residue stretch at 5-267 (VIIFDTTLRD…HTNINHHEIW (263 aa)) folds into the Pyruvate carboxyltransferase domain. Asp14, His202, His204, and Asn238 together coordinate Mn(2+). The tract at residues 392–523 (RLDYFSVQSG…QNKENNKETV (132 aa)) is regulatory domain.

The protein belongs to the alpha-IPM synthase/homocitrate synthase family. LeuA type 1 subfamily. In terms of assembly, homodimer. Mn(2+) serves as cofactor.

The protein resides in the cytoplasm. The enzyme catalyses 3-methyl-2-oxobutanoate + acetyl-CoA + H2O = (2S)-2-isopropylmalate + CoA + H(+). It functions in the pathway amino-acid biosynthesis; L-leucine biosynthesis; L-leucine from 3-methyl-2-oxobutanoate: step 1/4. Its function is as follows. Catalyzes the condensation of the acetyl group of acetyl-CoA with 3-methyl-2-oxobutanoate (2-ketoisovalerate) to form 3-carboxy-3-hydroxy-4-methylpentanoate (2-isopropylmalate). This Salmonella newport (strain SL254) protein is 2-isopropylmalate synthase.